The primary structure comprises 88 residues: Kunitz-type U15-theraphotoxin-Hhn1b (88 aa).

The signal sequence occupies residues 1 to 27; that stretch reads MGTARFLRAVLLLSVLLMVTFPALLSA. Positions 28–33 are excised as a propeptide; it reads EHHDGR. The BPTI/Kunitz inhibitor domain occupies 37 to 85; that stretch reads CRLPSDSGDCLRFFEMWYFDGTTCTKFVYGGYGGNDNRFPTEKACVKRC. Disulfide bonds link Cys-37/Cys-85 and Cys-60/Cys-81.

It belongs to the venom Kunitz-type family. 03 (sub-Kunitz) subfamily. Expressed by the venom gland.

It is found in the secreted. Serine protease inhibitor that inhibits trypsin at a molar ratio of 1:1. The chain is Kunitz-type U15-theraphotoxin-Hhn1b from Cyriopagopus hainanus (Chinese bird spider).